The chain runs to 323 residues: Olfactory receptor 6T1 (323 aa).

Over 1 to 25 (MNPENWTQVTSFVLLGFPSSHLIQF) the chain is Extracellular. A glycan (N-linked (GlcNAc...) asparagine) is linked at asparagine 5. The helical transmembrane segment at 26–46 (LVFLGLMVTYIVTATGKLLII) threads the bilayer. The Cytoplasmic portion of the chain corresponds to 47–54 (VLSWIDQR). A helical membrane pass occupies residues 55–75 (LHIQMYFFLRNFSFLELLLVT). Over 76 to 99 (VVVPKMLVVILTGDHTISFVSCII) the chain is Extracellular. Cysteine 97 and cysteine 189 are disulfide-bonded. A helical membrane pass occupies residues 100–120 (QSYLYFFLGTTDFFLLAVMSL). Residues 121-139 (DRYLAICRPLRYETLMNGH) are Cytoplasmic-facing. The chain crosses the membrane as a helical span at residues 140–160 (VCSQLVLASWLAGFLWVLCPT). Residues 161–197 (VLMASLPFCGPNGIDHFFRDSWPLLRLSCGDTHLLKL) are Extracellular-facing. Residues 198–217 (VAFMLSTLVLLGSLALTSVS) form a helical membrane-spanning segment. Topologically, residues 218–237 (YACILATVLRAPTAAERRKA) are cytoplasmic. Residues 238–258 (FSTCASHLTVVVIIYGSSIFL) traverse the membrane as a helical segment. Topologically, residues 259 to 271 (YIRMSEAQSKLLN) are extracellular. Residues 272–292 (KGASVLSCIITPLLNPFIFTL) form a helical membrane-spanning segment. At 293-323 (RNDKVQQALREALGWPRLTAVMKLRVTSQRK) the chain is on the cytoplasmic side.

This sequence belongs to the G-protein coupled receptor 1 family.

Its subcellular location is the cell membrane. In terms of biological role, odorant receptor. The protein is Olfactory receptor 6T1 (OR6T1) of Homo sapiens (Human).